Here is a 371-residue protein sequence, read N- to C-terminus: Cysteine proteinase 1 (371 aa).

Positions 1 to 18 (MAHRVLLLLSLASAAAVA) are cleaved as a signal peptide. A propeptide spans 19 to 136 (AAVDAEDPLI…HEAPVLPTDG (118 aa)) (activation peptide). Disulfide bonds link cysteine 158–cysteine 208 and cysteine 192–cysteine 241. Cysteine 161 is an active-site residue. The N-linked (GlcNAc...) asparagine glycan is linked to asparagine 254. Cysteine 297 and cysteine 354 are joined by a disulfide. Residues histidine 303 and asparagine 330 contribute to the active site.

Belongs to the peptidase C1 family. In terms of tissue distribution, expressed during the late stages of seed ripening, in mature seeds and during germination.

In terms of biological role, involved in the degradation of the storage protein zein. May play a role in proteolysis during emergencies. The protein is Cysteine proteinase 1 (CCP1) of Zea mays (Maize).